The following is a 157-amino-acid chain: MSGFLEGSRCSECMDWGEKRNTIASIAAGVLFFTGWWIIIDAAVMYPRMDQFNHSYHTCGVIATIAFLMINAVSNGQVRGDSYSEGCLGQTGARIWLFIGFMLAFGSLIASMWILFGGYVAKEKDVVYPGIAVFFQNAFIFFGGLVFKFGRTEDLWQ.

Ser-2 bears the N-acetylserine mark. At Ser-2 the chain carries Phosphoserine. A run of 4 helical transmembrane segments spans residues 26–46 (IAAG…AVMY), 58–78 (TCGV…NGQV), 95–115 (IWLF…MWIL), and 126–146 (VVYP…GGLV).

The protein belongs to the UPF0220 family.

It localises to the membrane. In Mus musculus (Mouse), this protein is Transmembrane protein 50A (Tmem50a).